The primary structure comprises 244 residues: 1-(5-phosphoribosyl)-5-[(5-phosphoribosylamino)methylideneamino] imidazole-4-carboxamide isomerase (244 aa).

D8 serves as the catalytic Proton acceptor. D131 serves as the catalytic Proton donor.

It belongs to the HisA/HisF family.

It localises to the cytoplasm. The enzyme catalyses 1-(5-phospho-beta-D-ribosyl)-5-[(5-phospho-beta-D-ribosylamino)methylideneamino]imidazole-4-carboxamide = 5-[(5-phospho-1-deoxy-D-ribulos-1-ylimino)methylamino]-1-(5-phospho-beta-D-ribosyl)imidazole-4-carboxamide. The protein operates within amino-acid biosynthesis; L-histidine biosynthesis; L-histidine from 5-phospho-alpha-D-ribose 1-diphosphate: step 4/9. This chain is 1-(5-phosphoribosyl)-5-[(5-phosphoribosylamino)methylideneamino] imidazole-4-carboxamide isomerase, found in Thermomicrobium roseum (strain ATCC 27502 / DSM 5159 / P-2).